The following is a 340-amino-acid chain: Glycerol-3-phosphate dehydrogenase [NAD(P)+] (340 aa).

Positions 14, 15, 35, and 108 each coordinate NADPH. Lysine 108 and glycine 136 together coordinate sn-glycerol 3-phosphate. Position 140 (alanine 140) interacts with NADPH. Sn-glycerol 3-phosphate is bound by residues lysine 191, aspartate 244, serine 254, arginine 255, and asparagine 256. Lysine 191 acts as the Proton acceptor in catalysis. Residue arginine 255 coordinates NADPH. NADPH-binding residues include valine 279 and glutamate 281.

It belongs to the NAD-dependent glycerol-3-phosphate dehydrogenase family.

It is found in the cytoplasm. The catalysed reaction is sn-glycerol 3-phosphate + NAD(+) = dihydroxyacetone phosphate + NADH + H(+). It carries out the reaction sn-glycerol 3-phosphate + NADP(+) = dihydroxyacetone phosphate + NADPH + H(+). The protein operates within membrane lipid metabolism; glycerophospholipid metabolism. Functionally, catalyzes the reduction of the glycolytic intermediate dihydroxyacetone phosphate (DHAP) to sn-glycerol 3-phosphate (G3P), the key precursor for phospholipid synthesis. The polypeptide is Glycerol-3-phosphate dehydrogenase [NAD(P)+] (Azotobacter vinelandii (strain DJ / ATCC BAA-1303)).